Consider the following 429-residue polypeptide: Keratin, type I cytoskeletal 20 (429 aa).

The tract at residues 1 to 26 (MDFSRRSFHRSLSSSSQGPALSTSGS) is disordered. A head region spans residues 1–74 (MDFSRRSFHR…SNGGDLFGGN (74 aa)). Low complexity predominate over residues 10–26 (RSLSSSSQGPALSTSGS). Serine 13, serine 16, and serine 26 each carry phosphoserine. The segment at 75 to 110 (EKLAMQNLNDRLASYLEKVRSLEQSNSKLEAQIKQW) is coil 1A. The region spanning 75–386 (EKLAMQNLND…RLLEGEDIKT (312 aa)) is the IF rod domain. A linker 1 region spans residues 111–128 (YETNAPSTIRDYSSYYAQ). Positions 129-220 (IKELQDQIKD…KEHQEEVEVL (92 aa)) are coil 1B. Positions 221-243 (RRQLGNNVNVEVDAAPGLNLGEI) are linker 12. The interval 244-382 (MNEMRQKYEI…ATYRRLLEGE (139 aa)) is coil 2. Residues 383–429 (DIKTTEYQLNTLEAKDIKKTRKIKTVVEEVVDGKVVSSEVKEIEENI) form a tail region.

This sequence belongs to the intermediate filament family. Heterotetramer of two type I and two type II keratins. Associates with KRT8. In terms of processing, hyperphosphorylation at Ser-13 occurs during the early stages of apoptosis but becomes less prominent during the later stages. Phosphorylation at Ser-13 also increases in response to stress brought on by cell injury. Proteolytically cleaved by caspases during apoptosis. Cleavage occurs at Asp-233. As to expression, expressed predominantly in the intestinal epithelium in differentiated villus cells.

Functionally, plays a significant role in maintaining keratin filament organization in intestinal epithelia. When phosphorylated, plays a role in the secretion of mucin in the small intestine. This is Keratin, type I cytoskeletal 20 (Krt20) from Rattus norvegicus (Rat).